The following is a 300-amino-acid chain: 4-hydroxy-tetrahydrodipicolinate synthase (300 aa).

Threonine 45 is a binding site for pyruvate. The Proton donor/acceptor role is filled by tyrosine 140. Residue lysine 169 is the Schiff-base intermediate with substrate of the active site. Isoleucine 210 is a binding site for pyruvate.

It belongs to the DapA family. As to quaternary structure, homotetramer; dimer of dimers.

The protein localises to the cytoplasm. The catalysed reaction is L-aspartate 4-semialdehyde + pyruvate = (2S,4S)-4-hydroxy-2,3,4,5-tetrahydrodipicolinate + H2O + H(+). It participates in amino-acid biosynthesis; L-lysine biosynthesis via DAP pathway; (S)-tetrahydrodipicolinate from L-aspartate: step 3/4. Catalyzes the condensation of (S)-aspartate-beta-semialdehyde [(S)-ASA] and pyruvate to 4-hydroxy-tetrahydrodipicolinate (HTPA). The sequence is that of 4-hydroxy-tetrahydrodipicolinate synthase from Helicobacter pylori (strain HPAG1).